Here is a 476-residue protein sequence, read N- to C-terminus: MRQSSESKQKLYLYNTVSRAKELFCSSNDPVKLYTCGPTVYDYAHIGNFRTYVFEDLLKRTLLFFGYSVRHIMNITDVDDKTLAGACKKNISLDAYTAPYIQAFFEDVASLNILPADVYPHATHYIPQMIEAIAKLLDEGIAYVGQDSSVYFSIEKFPTYGKLSQLKLQDLQCCSRVSSDEYDKENLSDFVLWKAYEEKRDGHIYWESPFGKGRPGWHLECSIMAMELLGASIDIHAGGVDNIFPHHENEIAQSESLSHQPFSRYWLHSEHLLVDGKKMSKSLGNFFTLRNLLDRGFSGEEIRYMLLQSHYRMQLNFTEEGLLACRQALKRLRDFISRIESVYPESSHISEDMQQHGEGFLQAFSEAIANDLNIAAALAALFDFIHQTNSTIDQANFTQADANYVLDIMKRINTVLGVIPFSADLEIPDHVKQLVEEREVARSEKNWKQADALRDQVASLGYSIEDAKSGPKVKKL.

Cys-36 is a binding site for Zn(2+). The short motif at 38 to 48 is the 'HIGH' region element; sequence PTVYDYAHIGN. Zn(2+) is bound by residues Cys-221, His-246, and Glu-250. The 'KMSKS' region signature appears at 278 to 282; sequence KMSKS. Lys-281 serves as a coordination point for ATP.

The protein belongs to the class-I aminoacyl-tRNA synthetase family. In terms of assembly, monomer. The cofactor is Zn(2+).

The protein localises to the cytoplasm. It carries out the reaction tRNA(Cys) + L-cysteine + ATP = L-cysteinyl-tRNA(Cys) + AMP + diphosphate. The chain is Cysteine--tRNA ligase from Chlamydia caviae (strain ATCC VR-813 / DSM 19441 / 03DC25 / GPIC) (Chlamydophila caviae).